An 87-amino-acid polypeptide reads, in one-letter code: Protein L (87 aa).

Its function is as follows. This protein inhibits the multiplication of double-stranded DNA phages, such as P1 and lambda. This chain is Protein L (L), found in Escherichia coli.